The primary structure comprises 247 residues: MSHRDTLFSAPIARLGDWTFDERVAEVFPDMIQRSVPGYSNIISMIGMLAERFVQPNTQVYDLGCSLGAATLSVRRNIRHEHCRIIAVDNSPAMIERCRRHIDAYKAPTPVEVVEGDIRDITIENASMVVLNFTLQFLEPAERQALLDKIYQGLNPGGALVLSEKFSFEDAKVGELLFNMHHDFKRANGYSELEISQKRSMLENVMLTDSVETHKSRLRKAGFEHSELWFQCFNFGSLVALKAGVAA.

S-adenosyl-L-methionine is bound by residues tyrosine 39, 64-66 (GCS), 89-90 (DN), 117-118 (DI), asparagine 132, and arginine 199.

The protein belongs to the class I-like SAM-binding methyltransferase superfamily. Cx-SAM synthase family. As to quaternary structure, homodimer.

It carries out the reaction prephenate + S-adenosyl-L-methionine = carboxy-S-adenosyl-L-methionine + 3-phenylpyruvate + H2O. Its function is as follows. Catalyzes the conversion of S-adenosyl-L-methionine (SAM) to carboxy-S-adenosyl-L-methionine (Cx-SAM). This Salmonella choleraesuis (strain SC-B67) protein is Carboxy-S-adenosyl-L-methionine synthase.